The sequence spans 445 residues: Putative H/ACA ribonucleoprotein complex subunit 4 (445 aa).

A disordered region spans residues 1–32 (MGKKDKRSKLEGDDLAEAQQKGSFQLPSSNET). Residues 20-32 (QKGSFQLPSSNET) show a composition bias toward polar residues. Residue Asp-113 is the Nucleophile of the active site. Positions 284–359 (HKRVVVKDSC…VVAKSKRVIM (76 aa)) constitute a PUA domain. Residues 386 to 445 (LDKFGKPNDTTPKSWAKEYVQTSTKKEVKKEETPDEEEEEAPKKKSKKSKKQESSDSDSD) form a disordered region.

It belongs to the pseudouridine synthase TruB family. As to quaternary structure, component of the small nucleolar ribonucleoprotein particle containing H/ACA-type snoRNAs (H/ACA snoRNPs).

It is found in the nucleus. The protein localises to the nucleolus. It catalyses the reaction a uridine in RNA = a pseudouridine in RNA. Its function is as follows. Plays a central role in ribosomal RNA processing. Probable catalytic subunit of H/ACA small nucleolar ribonucleoprotein (H/ACA snoRNP) complex, which catalyzes pseudouridylation of rRNA. This involves the isomerization of uridine such that the ribose is subsequently attached to C5, instead of the normal N1. Pseudouridine ('psi') residues may serve to stabilize the conformation of rRNAs. The polypeptide is Putative H/ACA ribonucleoprotein complex subunit 4 (Caenorhabditis elegans).